We begin with the raw amino-acid sequence, 401 residues long: tRNA(Ile)-lysidine synthase (401 aa).

Position 17-22 (17-22 (SGGPDS)) interacts with ATP.

It belongs to the tRNA(Ile)-lysidine synthase family.

It localises to the cytoplasm. It carries out the reaction cytidine(34) in tRNA(Ile2) + L-lysine + ATP = lysidine(34) in tRNA(Ile2) + AMP + diphosphate + H(+). Functionally, ligates lysine onto the cytidine present at position 34 of the AUA codon-specific tRNA(Ile) that contains the anticodon CAU, in an ATP-dependent manner. Cytidine is converted to lysidine, thus changing the amino acid specificity of the tRNA from methionine to isoleucine. This chain is tRNA(Ile)-lysidine synthase, found in Mycoplasma mycoides subsp. mycoides SC (strain CCUG 32753 / NCTC 10114 / PG1).